Consider the following 359-residue polypeptide: Large ribosomal subunit protein uL3 (359 aa).

The segment at Val-336–Gln-359 is disordered.

It belongs to the universal ribosomal protein uL3 family. Part of the 50S ribosomal subunit. Forms a cluster with proteins L14 and L24e.

Its function is as follows. One of the primary rRNA binding proteins, it binds directly near the 3'-end of the 23S rRNA, where it nucleates assembly of the 50S subunit. The polypeptide is Large ribosomal subunit protein uL3 (Thermococcus sibiricus (strain DSM 12597 / MM 739)).